Reading from the N-terminus, the 311-residue chain is Malate dehydrogenase (311 aa).

NAD(+) contacts are provided by residues Gly-7–Gly-13 and Asp-34. Residues Arg-81 and Arg-87 each coordinate substrate. NAD(+)-binding positions include Asn-94 and Ile-117–Asn-119. Substrate contacts are provided by Asn-119 and Arg-153. His-177 serves as the catalytic Proton acceptor. Met-227 lines the NAD(+) pocket.

The protein belongs to the LDH/MDH superfamily. MDH type 1 family. As to quaternary structure, homodimer.

The catalysed reaction is (S)-malate + NAD(+) = oxaloacetate + NADH + H(+). Catalyzes the reversible oxidation of malate to oxaloacetate. This is Malate dehydrogenase from Shewanella putrefaciens (strain CN-32 / ATCC BAA-453).